The primary structure comprises 274 residues: MQNITQSWFVQGMIKATTDAWLKGWDERNGGNLTLRLDDADIAPYHDNFHQQPRYIPLSQPMPLLANTPFIVTGSGKFFRNVQLDPAANLGIVKVDSDGAGYHILWGLTNEAVPTSELPAHFLSHCERIKATNGKDRVIMHCHATNLIALTYVLENDTAVFTRQLWEGSTECLVVFPDGVGILPWMVPGTDEIGQATAQEMQKHSLVLWPFHGVFGSGPTLDETFGLIDTAEKSAQILVKVYSMGGMKQTISREELIALGQRFGVTPLASALAL.

Glu117 is a catalytic residue. Residues His141, His143, and His212 each contribute to the Zn(2+) site.

It belongs to the aldolase class II family. RhaD subfamily. In terms of assembly, homotetramer. Requires Zn(2+) as cofactor.

Its subcellular location is the cytoplasm. It carries out the reaction L-rhamnulose 1-phosphate = (S)-lactaldehyde + dihydroxyacetone phosphate. It functions in the pathway carbohydrate degradation; L-rhamnose degradation; glycerone phosphate from L-rhamnose: step 3/3. Its function is as follows. Catalyzes the reversible cleavage of L-rhamnulose-1-phosphate to dihydroxyacetone phosphate (DHAP) and L-lactaldehyde. The sequence is that of Rhamnulose-1-phosphate aldolase from Escherichia coli O45:K1 (strain S88 / ExPEC).